Reading from the N-terminus, the 452-residue chain is Phosphoglucosamine mutase (452 aa).

Ser-103 (phosphoserine intermediate) is an active-site residue. Ser-103, Asp-244, Asp-246, and Asp-248 together coordinate Mg(2+). Ser-103 carries the post-translational modification Phosphoserine.

It belongs to the phosphohexose mutase family. Mg(2+) serves as cofactor. Post-translationally, activated by phosphorylation.

It carries out the reaction alpha-D-glucosamine 1-phosphate = D-glucosamine 6-phosphate. Functionally, catalyzes the conversion of glucosamine-6-phosphate to glucosamine-1-phosphate. The chain is Phosphoglucosamine mutase from Rhodospirillum rubrum (strain ATCC 11170 / ATH 1.1.1 / DSM 467 / LMG 4362 / NCIMB 8255 / S1).